The sequence spans 87 residues: Putative regulatory protein BH2513 (87 aa).

Belongs to the RemA family.

The protein is Putative regulatory protein BH2513 of Halalkalibacterium halodurans (strain ATCC BAA-125 / DSM 18197 / FERM 7344 / JCM 9153 / C-125) (Bacillus halodurans).